The sequence spans 750 residues: MIIRSSEPEVKILVDRDPIKTSFEEWARPGHFSRTIAKGPDTTTWIWNLHADAHDFDSHTSDLEEISRKVFSAHFGQLSIIFLWLSGMYFHGARFSNYEAWLSDPTHIGPSAQVVWPIVGQEILNGDVGGGFRGIQITSGFFQIWRASGITSELQLYCTAIGALVFAALMLFAGWFHYHKAAPKLAWFQDVESMLNHHLAGLLGLGSLSWAGHQVHVSLPINQFLNAGVDPKEIPLPHEFILNRDLLAQLYPSFSEGATPLFTLNWSKYAEFLTFRGGLDPVTGGLWLTDIAHHHLAIAILFLIAGHMYRTNWGIGHDLKEILEAHKGPFTGQGHKGLYEILTTSWHAQLSLNLAMLGSLTIVVAHHMYSMPPYPYLATDYGTQLSLFTHHMWIGAFLIVGAAAHAAIFMVRDYDPTTRYNDLLDRVLRHRDAIISHLNWVCIFLGFHSFGLYIHNDTMSALGRPQDMFSDTAIQLQPVFAQWIQNTHALAPGSTAPGATTGTSLTWGGVDLVAVGGKVALLPIPLGTADFLVHHIHAFTIHVTLLILLKGVLFARSSRLIPDKANLGFRFPCDGPGRGGTCQVSAWDHVFLGLFWMYNAISVVIFHFSWKMQSDVWGSISEQGVVTHITGGNFAQSSITINGWLRDFLWAQASQVIQSYGSSLSAYGLFFLGAHFVWAFSLMFLFSGRGYWQELIESIVWAHNKLKVAPATQPRALSIVQGRAVGVTHYLLGGIATTWAFFLARIIAVG.

8 helical membrane passes run 70-93, 156-179, 195-219, 291-309, 346-369, 385-411, 433-455, and 531-549; these read VFSA…FHGA, LYCT…FHYH, LNHH…HVSL, IAHH…GHMY, WHAQ…HHMY, LSLF…IFMV, AIIS…LYIH, and FLVH…LILL. [4Fe-4S] cluster-binding residues include cysteine 573 and cysteine 582. 2 consecutive transmembrane segments (helical) span residues 589-610 and 664-686; these read HVFL…HFSW and LSAY…MFLF. A chlorophyll a'-binding site is contributed by histidine 675. 2 residues coordinate chlorophyll a: methionine 683 and tyrosine 691. Tryptophan 692 contacts phylloquinone. A helical membrane pass occupies residues 724-744; that stretch reads AVGVTHYLLGGIATTWAFFLA.

It belongs to the PsaA/PsaB family. In terms of assembly, the PsaA/B heterodimer binds the P700 chlorophyll special pair and subsequent electron acceptors. PSI consists of a core antenna complex that captures photons, and an electron transfer chain that converts photonic excitation into a charge separation. The eukaryotic PSI reaction center is composed of at least 11 subunits. P700 is a chlorophyll a/chlorophyll a' dimer, A0 is one or more chlorophyll a, A1 is one or both phylloquinones and FX is a shared 4Fe-4S iron-sulfur center. is required as a cofactor.

It localises to the plastid. The protein localises to the chloroplast thylakoid membrane. The catalysed reaction is reduced [plastocyanin] + hnu + oxidized [2Fe-2S]-[ferredoxin] = oxidized [plastocyanin] + reduced [2Fe-2S]-[ferredoxin]. Its function is as follows. PsaA and PsaB bind P700, the primary electron donor of photosystem I (PSI), as well as the electron acceptors A0, A1 and FX. PSI is a plastocyanin-ferredoxin oxidoreductase, converting photonic excitation into a charge separation, which transfers an electron from the donor P700 chlorophyll pair to the spectroscopically characterized acceptors A0, A1, FX, FA and FB in turn. Oxidized P700 is reduced on the lumenal side of the thylakoid membrane by plastocyanin. The sequence is that of Photosystem I P700 chlorophyll a apoprotein A1 from Pelargonium hortorum (Common geranium).